The following is a 139-amino-acid chain: Large ribosomal subunit protein uL16 (139 aa).

The span at 1–11 (MLQPKRTKYRK) shows a compositional bias: basic residues. The interval 1–30 (MLQPKRTKYRKPFLQSHDKRKAHKGNKVSF) is disordered.

This sequence belongs to the universal ribosomal protein uL16 family. In terms of assembly, part of the 50S ribosomal subunit.

In terms of biological role, binds 23S rRNA and is also seen to make contacts with the A and possibly P site tRNAs. The protein is Large ribosomal subunit protein uL16 of Mycoplasmopsis synoviae (strain 53) (Mycoplasma synoviae).